The sequence spans 509 residues: ATP synthase subunit alpha (509 aa).

169–176 (GDRQTGKT) is an ATP binding site.

This sequence belongs to the ATPase alpha/beta chains family. In terms of assembly, F-type ATPases have 2 components, CF(1) - the catalytic core - and CF(0) - the membrane proton channel. CF(1) has five subunits: alpha(3), beta(3), gamma(1), delta(1), epsilon(1). CF(0) has four main subunits: a(1), b(1), b'(1) and c(9-12).

It localises to the cell inner membrane. It catalyses the reaction ATP + H2O + 4 H(+)(in) = ADP + phosphate + 5 H(+)(out). Functionally, produces ATP from ADP in the presence of a proton gradient across the membrane. The alpha chain is a regulatory subunit. This chain is ATP synthase subunit alpha, found in Bradyrhizobium sp. (strain ORS 278).